A 285-amino-acid chain; its full sequence is MVQILDGRSVSKKILQEVKDKVAKAGFPVKLATIYNEENEGSKMYVGMKIRRATFAGLISVEYKVDNSWKTDDILRLLSKLNMDSSICGILVQSPLGDGIDESKIFNAIDPLKDADGLSAFNQGLLFENAKENYIVPATPAGVISLLEAYHYQFAAKNALVVGRSVLFGRPMSVLLTNRDMTVTLAHSKTPVDQLRQFAKRADLIVVAIGKANWFQFTDLKKDVVVIDVGANKLNGHATGDVDFEKVYPHVSQISPVPGGVGPMTIATLIKHTFDLAVFQQGEQK.

Residues 163-165 (GRS), Ser-188, and Ala-231 each bind NADP(+).

This sequence belongs to the tetrahydrofolate dehydrogenase/cyclohydrolase family. Homodimer.

The enzyme catalyses (6R)-5,10-methylene-5,6,7,8-tetrahydrofolate + NADP(+) = (6R)-5,10-methenyltetrahydrofolate + NADPH. It carries out the reaction (6R)-5,10-methenyltetrahydrofolate + H2O = (6R)-10-formyltetrahydrofolate + H(+). It participates in one-carbon metabolism; tetrahydrofolate interconversion. Its function is as follows. Catalyzes the oxidation of 5,10-methylenetetrahydrofolate to 5,10-methenyltetrahydrofolate and then the hydrolysis of 5,10-methenyltetrahydrofolate to 10-formyltetrahydrofolate. This is Bifunctional protein FolD from Oenococcus oeni (strain ATCC BAA-331 / PSU-1).